We begin with the raw amino-acid sequence, 411 residues long: RNA binding protein fox-1 homolog 2 (411 aa).

Residues 16–175 (TRGTKRESDQ…SETKASPKRL (160 aa)) form a disordered region. Composition is skewed to polar residues over residues 58–83 (PVSQAYQGFAPLNSQGNQEPTATPDT) and 99–119 (NGLSTDYGSQHTQDYATQSTE). Over residues 135–165 (SAPATSTANASSTTDGSQTEGQQSQSQNNEN) the composition is skewed to low complexity. Positions 173–249 (KRLHVSNIPF…RKIEVNNATA (77 aa)) constitute an RRM domain.

In terms of assembly, interacts with papd4/gld2.

Its subcellular location is the nucleus. The protein resides in the cytoplasm. In terms of biological role, RNA-binding protein that regulates alternative splicing events by binding to 5'-UGCAUGU-3' elements. Regulates alternative splicing of tissue-specific exons. This Xenopus laevis (African clawed frog) protein is RNA binding protein fox-1 homolog 2 (rbfox2).